A 402-amino-acid polypeptide reads, in one-letter code: S-adenosylmethionine synthase (402 aa).

Residue 137-142 participates in ATP binding; sequence GQGSAD.

Belongs to the AdoMet synthase 2 family. Mg(2+) serves as cofactor.

The catalysed reaction is L-methionine + ATP + H2O = S-adenosyl-L-methionine + phosphate + diphosphate. Its pathway is amino-acid biosynthesis; S-adenosyl-L-methionine biosynthesis; S-adenosyl-L-methionine from L-methionine: step 1/1. Functionally, catalyzes the formation of S-adenosylmethionine from methionine and ATP. In Pyrobaculum islandicum (strain DSM 4184 / JCM 9189 / GEO3), this protein is S-adenosylmethionine synthase.